The sequence spans 380 residues: Putative ankyrin repeat protein RF_1306 (380 aa).

ANK repeat units follow at residues 48-76 (NKWS…NINA), 80-109 (KCRT…KIAP), 112-143 (YGWS…KYDK), 170-199 (NNKT…KFDI), 203-233 (LGYK…GKNT), 239-268 (LEKV…GFDK), 270-299 (LGQK…DAQY), 303-333 (LGRS…DINY), and 337-366 (SGLN…YESY).

This is Putative ankyrin repeat protein RF_1306 from Rickettsia felis (strain ATCC VR-1525 / URRWXCal2) (Rickettsia azadi).